The primary structure comprises 390 residues: Transforming growth factor beta-1 proprotein (390 aa).

A signal peptide spans 1 to 29 (MPPSGLRLLPLLLPLPWLLVLTPGRPAAG). Residues 30-74 (LSTCKTIDMELVKRKRIEAIRGQILSKLRLASPPSQGEVPPGPLP) are straightjacket domain. Positions 75–271 (EAVLALYNST…ATPLERAQHL (197 aa)) are arm domain. 3 N-linked (GlcNAc...) asparagine glycosylation sites follow: Asn-82, Asn-136, and Asn-176. A bowtie tail region spans residues 226-252 (DSKDNVLHVEINGISPKRRGDLGTIHD). A Cell attachment site motif is present at residues 244–246 (RGD). 4 cysteine pairs are disulfide-bonded: Cys-285–Cys-294, Cys-293–Cys-356, Cys-322–Cys-387, and Cys-326–Cys-389.

It belongs to the TGF-beta family. In terms of assembly, homodimer; disulfide-linked. Interacts with the serine proteases, HTRA1 and HTRA3: the interaction with either inhibits TGFB1-mediated signaling and the HTRA protease activity is required for this inhibition. May interact with THSD4; this interaction may lead to sequestration by FBN1 microfibril assembly and attenuation of TGFB signaling. Interacts with CD109, DPT and ASPN. Interacts with EFEMP2. Interacts with TSKU; the interaction contributes to regulation of the hair cycle. Interacts with TGFBR3. Homodimer; disulfide-linked. Interacts with transforming growth factor beta-1 (TGF-beta-1) chain; interaction is non-covalent and maintains TGF-beta-1 in a latent state; each latency-associated peptide (LAP) monomer interacts with TGF-beta-1 in the other monomer. Interacts with LTBP1; leading to regulation of TGF-beta-1 activation. Interacts with LRRC32/GARP; leading to regulation of TGF-beta-1 activation on the surface of activated regulatory T-cells (Tregs). Interacts with LRRC33/NRROS; leading to regulation of TGF-beta-1 activation in macrophages and microglia. Interacts (via cell attachment site) with integrins ITGAV and ITGB6 (ITGAV:ITGB6), leading to release of the active TGF-beta-1. Interacts with NREP; the interaction results in a decrease in TGFB1 autoinduction. Interacts with HSP90AB1; inhibits latent TGFB1 activation. As to quaternary structure, homodimer; disulfide-linked. Interacts with TGF-beta receptors (TGFBR1 and TGFBR2), leading to signal transduction. Post-translationally, transforming growth factor beta-1 proprotein: The precursor proprotein is cleaved in the Golgi apparatus by FURIN to form Transforming growth factor beta-1 (TGF-beta-1) and Latency-associated peptide (LAP) chains, which remain non-covalently linked, rendering TGF-beta-1 inactive. N-glycosylated. Deglycosylation leads to activation of Transforming growth factor beta-1 (TGF-beta-1); mechanisms triggering deglycosylation-driven activation of TGF-beta-1 are however unclear. As to expression, abundant in the bone matrix. Expressed in cardiomyocytes.

It localises to the secreted. It is found in the extracellular space. Its subcellular location is the extracellular matrix. Transforming growth factor beta-1 proprotein: Precursor of the Latency-associated peptide (LAP) and Transforming growth factor beta-1 (TGF-beta-1) chains, which constitute the regulatory and active subunit of TGF-beta-1, respectively. In terms of biological role, required to maintain the Transforming growth factor beta-1 (TGF-beta-1) chain in a latent state during storage in extracellular matrix. Associates non-covalently with TGF-beta-1 and regulates its activation via interaction with 'milieu molecules', such as LTBP1, LRRC32/GARP and LRRC33/NRROS, that control activation of TGF-beta-1. Interaction with LRRC33/NRROS regulates activation of TGF-beta-1 in macrophages and microglia. Interaction with LRRC32/GARP controls activation of TGF-beta-1 on the surface of activated regulatory T-cells (Tregs). Interaction with integrins (ITGAV:ITGB6 or ITGAV:ITGB8) results in distortion of the Latency-associated peptide chain and subsequent release of the active TGF-beta-1. Its function is as follows. Multifunctional protein that regulates the growth and differentiation of various cell types and is involved in various processes, such as normal development, immune function, microglia function and responses to neurodegeneration. Activation into mature form follows different steps: following cleavage of the proprotein in the Golgi apparatus, Latency-associated peptide (LAP) and Transforming growth factor beta-1 (TGF-beta-1) chains remain non-covalently linked rendering TGF-beta-1 inactive during storage in extracellular matrix. At the same time, LAP chain interacts with 'milieu molecules', such as LTBP1, LRRC32/GARP and LRRC33/NRROS that control activation of TGF-beta-1 and maintain it in a latent state during storage in extracellular milieus. TGF-beta-1 is released from LAP by integrins (ITGAV:ITGB6 or ITGAV:ITGB8): integrin-binding to LAP stabilizes an alternative conformation of the LAP bowtie tail and results in distortion of the LAP chain and subsequent release of the active TGF-beta-1. Once activated following release of LAP, TGF-beta-1 acts by binding to TGF-beta receptors (TGFBR1 and TGFBR2), which transduce signal. While expressed by many cells types, TGF-beta-1 only has a very localized range of action within cell environment thanks to fine regulation of its activation by Latency-associated peptide chain (LAP) and 'milieu molecules'. Plays an important role in bone remodeling: acts as a potent stimulator of osteoblastic bone formation, causing chemotaxis, proliferation and differentiation in committed osteoblasts. Can promote either T-helper 17 cells (Th17) or regulatory T-cells (Treg) lineage differentiation in a concentration-dependent manner. At high concentrations, leads to FOXP3-mediated suppression of RORC and down-regulation of IL-17 expression, favoring Treg cell development. At low concentrations in concert with IL-6 and IL-21, leads to expression of the IL-17 and IL-23 receptors, favoring differentiation to Th17 cells. Stimulates sustained production of collagen through the activation of CREB3L1 by regulated intramembrane proteolysis (RIP). Mediates SMAD2/3 activation by inducing its phosphorylation and subsequent translocation to the nucleus. Positively regulates odontoblastic differentiation in dental papilla cells, via promotion of IPO7-mediated translocation of phosphorylated SMAD2 to the nucleus and subsequent transcription of target genes. Can induce epithelial-to-mesenchymal transition (EMT) and cell migration in various cell types. This chain is Transforming growth factor beta-1 proprotein (Tgfb1), found in Rattus norvegicus (Rat).